Reading from the N-terminus, the 127-residue chain is Fluoride-specific ion channel FluC (127 aa).

The next 4 membrane-spanning stretches (helical) occupy residues 3–23, 38–58, 67–87, and 102–122; these read LVFLWAALGGALGSSLRYFVG, LGTFSVNLIGCFVIGLMGHLA, FGIFFVTGVLGGFTTFSSYGL, and ISYVLGTNILGLIGVAIGWFL. Na(+) is bound by residues G77 and T80.

It belongs to the fluoride channel Fluc/FEX (TC 1.A.43) family.

It is found in the cell inner membrane. It carries out the reaction fluoride(in) = fluoride(out). Na(+) is not transported, but it plays an essential structural role and its presence is essential for fluoride channel function. In terms of biological role, fluoride-specific ion channel. Important for reducing fluoride concentration in the cell, thus reducing its toxicity. The polypeptide is Fluoride-specific ion channel FluC (Helicobacter acinonychis (strain Sheeba)).